The sequence spans 148 residues: Putative nickel-responsive regulator (148 aa).

The Ni(2+) site is built by H88, H99, H101, and C107.

It belongs to the transcriptional regulatory CopG/NikR family. Ni(2+) is required as a cofactor.

Its function is as follows. Transcriptional regulator. In Helicobacter pylori (strain P12), this protein is Putative nickel-responsive regulator.